The sequence spans 447 residues: Methylenetetrahydrofolate--tRNA-(uracil-5-)-methyltransferase TrmFO (447 aa).

FAD is bound at residue 10-15; it reads GAGLAG.

This sequence belongs to the MnmG family. TrmFO subfamily. FAD serves as cofactor.

It localises to the cytoplasm. The enzyme catalyses uridine(54) in tRNA + (6R)-5,10-methylene-5,6,7,8-tetrahydrofolate + NADH + H(+) = 5-methyluridine(54) in tRNA + (6S)-5,6,7,8-tetrahydrofolate + NAD(+). The catalysed reaction is uridine(54) in tRNA + (6R)-5,10-methylene-5,6,7,8-tetrahydrofolate + NADPH + H(+) = 5-methyluridine(54) in tRNA + (6S)-5,6,7,8-tetrahydrofolate + NADP(+). Functionally, catalyzes the folate-dependent formation of 5-methyl-uridine at position 54 (M-5-U54) in all tRNAs. This chain is Methylenetetrahydrofolate--tRNA-(uracil-5-)-methyltransferase TrmFO, found in Symbiobacterium thermophilum (strain DSM 24528 / JCM 14929 / IAM 14863 / T).